A 76-amino-acid polypeptide reads, in one-letter code: Small proline-rich protein 2G (76 aa).

3 consecutive repeat copies span residues 21–29 (PKCPEPCPL), 30–38 (PKCPEPCPP), and 39–47 (PKCPEPCPE). The segment at 21–47 (PKCPEPCPLPKCPEPCPPPKCPEPCPE) is 3 X 9 AA approximate tandem repeats. The tract at residues 55–76 (QQKCPPVQTPPPCQQKCPPKSK) is disordered.

It belongs to the cornifin (SPRR) family. As to expression, expressed in uterus.

The protein resides in the cytoplasm. Its function is as follows. Cross-linked envelope protein of keratinocytes. It is a keratinocyte protein that first appears in the cell cytosol, but ultimately becomes cross-linked to membrane proteins by transglutaminase. All that results in the formation of an insoluble envelope beneath the plasma membrane. The chain is Small proline-rich protein 2G (Sprr2g) from Mus musculus (Mouse).